Here is a 610-residue protein sequence, read N- to C-terminus: Glutamine--fructose-6-phosphate aminotransferase [isomerizing] (610 aa).

Cys2 acts as the Nucleophile; for GATase activity in catalysis. Residues 2–218 form the Glutamine amidotransferase type-2 domain; the sequence is CGIVGAVAQR…EGDIAEITRR (217 aa). SIS domains are found at residues 278 to 426 and 459 to 600; these read IVDS…VKGH and LAED…VDQP. Lys605 serves as the catalytic For Fru-6P isomerization activity.

Homodimer.

It is found in the cytoplasm. It carries out the reaction D-fructose 6-phosphate + L-glutamine = D-glucosamine 6-phosphate + L-glutamate. Its function is as follows. Catalyzes the first step in hexosamine metabolism, converting fructose-6P into glucosamine-6P using glutamine as a nitrogen source. The sequence is that of Glutamine--fructose-6-phosphate aminotransferase [isomerizing] from Haemophilus influenzae (strain ATCC 51907 / DSM 11121 / KW20 / Rd).